The primary structure comprises 91 residues: Protein translocase subunit SecG (91 aa).

Helical transmembrane passes span 16–36 and 71–91; these read HTFL…VVLL and LTII…YLGM.

It belongs to the SecG family. Component of the Sec protein translocase complex. Heterotrimer consisting of SecY, SecE and SecG subunits. The heterotrimers can form oligomers, although 1 heterotrimer is thought to be able to translocate proteins. Interacts with SecDF, and other proteins may be involved. The channel interacts with SecA via subunit SecY. Also part of the accessory SecA2/SecY2 protein translocation apparatus required to export cell wall protein GspB.

It localises to the cell membrane. Subunit of the protein translocation channel SecYEG. While not essential, it considerably increases the export efficiency of extracellular proteins. This Staphylococcus aureus (strain NCTC 8325 / PS 47) protein is Protein translocase subunit SecG.